The following is a 901-amino-acid chain: Protein translocase subunit SecA (901 aa).

ATP is bound by residues glutamine 87, 105–109, and aspartate 512; that span reads GEGKT. Residues 852 to 901 form a disordered region; that stretch reads AQMQQLSHQDDDSAAAAALAAQTGDRKVGRNDPCPCGSGKKYKQCHGRLS. 4 residues coordinate Zn(2+): cysteine 885, cysteine 887, cysteine 896, and histidine 897. Residues 891–901 show a composition bias toward basic residues; it reads KKYKQCHGRLS.

The protein belongs to the SecA family. Monomer and homodimer. Part of the essential Sec protein translocation apparatus which comprises SecA, SecYEG and auxiliary proteins SecDF-YajC and YidC. Zn(2+) is required as a cofactor.

The protein localises to the cell inner membrane. Its subcellular location is the cytoplasm. The enzyme catalyses ATP + H2O + cellular proteinSide 1 = ADP + phosphate + cellular proteinSide 2.. Part of the Sec protein translocase complex. Interacts with the SecYEG preprotein conducting channel. Has a central role in coupling the hydrolysis of ATP to the transfer of proteins into and across the cell membrane, serving both as a receptor for the preprotein-SecB complex and as an ATP-driven molecular motor driving the stepwise translocation of polypeptide chains across the membrane. The polypeptide is Protein translocase subunit SecA (Citrobacter koseri (strain ATCC BAA-895 / CDC 4225-83 / SGSC4696)).